The following is a 93-amino-acid chain: NADH-dependent phenylglyoxylate dehydrogenase subunit delta (93 aa).

4Fe-4S ferredoxin-type domains are found at residues 39-68 and 66-93; these read MRPV…EHAA and HAAW…RRSR.

Dimer of heteropentamers composed of an alpha (PadG), a beta (PadI), a gamma (PadE), a delta (PadF) and an epsilon (PadH) subunit. The cofactor is [4Fe-4S] cluster.

The enzyme catalyses phenylglyoxylate + NAD(+) + CoA = benzoyl-CoA + CO2 + NADH. With respect to regulation, activated by magnesium ions and thiamine diphosphate. Involved in the anaerobic metabolism of phenylalanine and phenylacetate. Catalyzes the oxidative decarboxylation of phenylglyoxylate to benzoyl-CoA and CO(2). It can also react slowly with 2-oxo-3-methylbutanoate and use different electron acceptors such as benzyl viologen, methyl viologen, FAD or FMN, but NAD seems to be the physiological electron acceptor. Also catalyzes an isotope exchange between CO(2) and the carboxyl group which proves partial or complete reversibility of the oxidative decarboxylation reaction. The sequence is that of NADH-dependent phenylglyoxylate dehydrogenase subunit delta (padF) from Aromatoleum evansii (Azoarcus evansii).